A 159-amino-acid polypeptide reads, in one-letter code: Intron-encoded endonuclease ai4 (159 aa).

The protein belongs to the LAGLIDADG endonuclease family.

It localises to the mitochondrion. Mitochondrial DNA endonuclease involved in intron homing. This chain is Intron-encoded endonuclease ai4 (ai4), found in Dictyostelium discoideum (Social amoeba).